The sequence spans 423 residues: Tyrosine--tRNA ligase (423 aa).

Residue Y35 participates in L-tyrosine binding. A 'HIGH' region motif is present at residues 40-49 (PTAPSLHAGH). The L-tyrosine site is built by Y170 and Q174. The 'KMSKS' region motif lies at 230 to 234 (KFGKS). ATP is bound at residue K233. The S4 RNA-binding domain occupies 355-412 (DLITDLLVATGLSASKGAARRTIAEGGVSVNNMKIDSDEWTPQASDFLHGRWLVLRRG).

Belongs to the class-I aminoacyl-tRNA synthetase family. TyrS type 1 subfamily. Homodimer.

Its subcellular location is the cytoplasm. The catalysed reaction is tRNA(Tyr) + L-tyrosine + ATP = L-tyrosyl-tRNA(Tyr) + AMP + diphosphate + H(+). Catalyzes the attachment of tyrosine to tRNA(Tyr) in a two-step reaction: tyrosine is first activated by ATP to form Tyr-AMP and then transferred to the acceptor end of tRNA(Tyr). This is Tyrosine--tRNA ligase from Mycobacterium sp. (strain KMS).